We begin with the raw amino-acid sequence, 397 residues long: Succinyl-diaminopimelate desuccinylase (397 aa).

Residue His-73 participates in Zn(2+) binding. Asp-75 is an active-site residue. Residue Asp-106 coordinates Zn(2+). Catalysis depends on Glu-140, which acts as the Proton acceptor. 3 residues coordinate Zn(2+): Glu-141, Glu-169, and His-366.

The protein belongs to the peptidase M20A family. DapE subfamily. Homodimer. The cofactor is Zn(2+). It depends on Co(2+) as a cofactor.

It carries out the reaction N-succinyl-(2S,6S)-2,6-diaminopimelate + H2O = (2S,6S)-2,6-diaminopimelate + succinate. The protein operates within amino-acid biosynthesis; L-lysine biosynthesis via DAP pathway; LL-2,6-diaminopimelate from (S)-tetrahydrodipicolinate (succinylase route): step 3/3. Functionally, catalyzes the hydrolysis of N-succinyl-L,L-diaminopimelic acid (SDAP), forming succinate and LL-2,6-diaminopimelate (DAP), an intermediate involved in the bacterial biosynthesis of lysine and meso-diaminopimelic acid, an essential component of bacterial cell walls. In Rhizobium etli (strain ATCC 51251 / DSM 11541 / JCM 21823 / NBRC 15573 / CFN 42), this protein is Succinyl-diaminopimelate desuccinylase.